Here is an 894-residue protein sequence, read N- to C-terminus: MILLAVLFLCFISSYSASVKGHTTGLSLNNDRLYKLKYSTEVFLDRGKGNLQDSVGYQISSNVDVVLLWRSPDGDDDQLIQITIKDVKVENVNQQRGEKSIFKGKKPPQIIRKENLEALQRPVLLHLIHGKVKEFYSYQNEPPAIQNLKRGLASLFQMQLSSGTTNEVDISGDCKVTYQAHQDKVTKIKALDSCTIERSGFTTRNQVLGVTSKATSVTTYKIEDSFVVAVLAEEIHALRLNFLQTIAGKIVSKQKLELKTTEAGPRLKSGKQVAAIIKAVDSKYTAIPIVGQVFQSECKGCSSLSQHWQSVRKHLQPDNLSKTEAVRSFLTFIQHLRTAKKEEILQILKAENKDILPQLVDAVTSAQTPDSLDAILDFLDFKSDSNIILQERFLYACGFASHPDEELLRALISKFKGSFGSNDIRESVMIIIGALVRKLCQNEGCKLKAVVDAKKLILGGLERAEKKEDTMMYLLALKNARLPEGIPLLLKYAEAAEGPISHLAVTTLQRYDAPFITDEVKKTMNRIYHQTRKVHEKTVRTTAAAVILNNNPSYMEVKNILLSIGELPKEMNKYMLSIVQDILRFEMPASKMVRRVLKEMVAHNYDRFSKSGSSSAYTGYIERGPHSASTYSLDILYSGSGILRRSNLNIFQYVGKTPLHAIQVVIEAQGLEALIAATPDEGEENLDSYAGLSPLLFDVQLRPVTFFNGYSDLMSKMLSASSDPISVVKGLILLIDHSQELQLQSGLKANMEVQGGLAIDISGSMEFSLWYRESKTRVKNRVTVVITGDITVDSSFVKAGLEISAETEAGLEFISTVQFSQYPFLVCLQMDRDGIPYRQFETKYERLSTGRGYVSRKRKEILVAGSEFPLHQENSEMCKVVFAPEPESSSSGWF.

Positions 1–18 are cleaved as a signal peptide; it reads MILLAVLFLCFISSYSAS. The region spanning 28 to 662 is the Vitellogenin domain; sequence LNNDRLYKLK…YVGKTPLHAI (635 aa). Cysteines 174 and 194 form a disulfide.

Heterodimer; heterodimerizes with the protein disulfide isomerase (P4HB/PDI). Interacts with APOB. Interacts with PRAP1.

It is found in the endoplasmic reticulum. It localises to the golgi apparatus. It carries out the reaction a 1,2-diacyl-sn-glycero-3-phosphocholine(in) = a 1,2-diacyl-sn-glycero-3-phosphocholine(out). The catalysed reaction is a 1,2-diacyl-sn-glycero-3-phosphoethanolamine(in) = a 1,2-diacyl-sn-glycero-3-phosphoethanolamine(out). The enzyme catalyses a cholesterol ester(in) = a cholesterol ester(out). It catalyses the reaction a triacyl-sn-glycerol(in) = a triacyl-sn-glycerol(out). Its function is as follows. Catalyzes the transport of triglyceride, cholesteryl ester, and phospholipid between phospholipid surfaces. Required for the assembly and secretion of plasma lipoproteins that contain apolipoprotein B. May be involved in regulating cholesteryl ester biosynthesis in cells that produce lipoproteins. The chain is Microsomal triglyceride transfer protein large subunit (MTTP) from Sus scrofa (Pig).